The following is an 835-amino-acid chain: Translation initiation factor IF-2 (835 aa).

The segment at 1–240 (MSDSDGKKTL…RKQERARQKA (240 aa)) is disordered. Residues 50–59 (AGKGGAGGVA) show a composition bias toward gly residues. Residues 86-152 (KAREAEEAAQ…AEAAKKRAAA (67 aa)) are compositionally biased toward basic and acidic residues. A compositionally biased stretch (low complexity) spans 153 to 169 (DKAAAAAPKSDAGVAPA). Residues 184-205 (RKAEREREERGRGAKGRNDGGR) show a composition bias toward basic and acidic residues. Residues 332–500 (PRPPVITIMG…AIALQAEILE (169 aa)) enclose the tr-type G domain. Residues 341–348 (GHVDHGKT) form a G1 region. 341–348 (GHVDHGKT) contributes to the GTP binding site. The G2 stretch occupies residues 366–370 (GITQH). Residues 388–391 (DTPG) are G3. GTP contacts are provided by residues 388 to 392 (DTPGH) and 442 to 445 (NKID). The tract at residues 442 to 445 (NKID) is G4. The interval 478-480 (SAH) is G5.

The protein belongs to the TRAFAC class translation factor GTPase superfamily. Classic translation factor GTPase family. IF-2 subfamily.

The protein resides in the cytoplasm. In terms of biological role, one of the essential components for the initiation of protein synthesis. Protects formylmethionyl-tRNA from spontaneous hydrolysis and promotes its binding to the 30S ribosomal subunits. Also involved in the hydrolysis of GTP during the formation of the 70S ribosomal complex. This chain is Translation initiation factor IF-2, found in Ruegeria sp. (strain TM1040) (Silicibacter sp.).